A 697-amino-acid chain; its full sequence is Glycine--tRNA ligase beta subunit (697 aa).

This sequence belongs to the class-II aminoacyl-tRNA synthetase family. In terms of assembly, tetramer of two alpha and two beta subunits.

The protein localises to the cytoplasm. The enzyme catalyses tRNA(Gly) + glycine + ATP = glycyl-tRNA(Gly) + AMP + diphosphate. The protein is Glycine--tRNA ligase beta subunit of Solidesulfovibrio magneticus (strain ATCC 700980 / DSM 13731 / RS-1) (Desulfovibrio magneticus).